The sequence spans 61 residues: Small ribosomal subunit protein uS14 (61 aa).

Zn(2+) contacts are provided by Cys-24, Cys-27, Cys-40, and Cys-43.

Belongs to the universal ribosomal protein uS14 family. Zinc-binding uS14 subfamily. As to quaternary structure, part of the 30S ribosomal subunit. Contacts proteins S3 and S10. The cofactor is Zn(2+).

In terms of biological role, binds 16S rRNA, required for the assembly of 30S particles and may also be responsible for determining the conformation of the 16S rRNA at the A site. In Campylobacter hominis (strain ATCC BAA-381 / DSM 21671 / CCUG 45161 / LMG 19568 / NCTC 13146 / CH001A), this protein is Small ribosomal subunit protein uS14.